The primary structure comprises 901 residues: Putative serine/threonine-protein kinase YPL150W (901 aa).

The region spanning 41–287 is the Protein kinase domain; sequence YKILKQIGEG…LSQVLRHPFL (247 aa). Residues 47–55 and K70 each bind ATP; that span reads IGEGSFGKV. D157 functions as the Proton acceptor in the catalytic mechanism. At S456 the chain carries Phosphoserine. The interval 500 to 530 is disordered; the sequence is APSSGSFLKKNSGSIQKSRTDTVANPSRTES. Residue S533 is modified to Phosphoserine. Residues 588–599 are compositionally biased toward low complexity; the sequence is SSISSEISQTST. 2 disordered regions span residues 588–629 and 745–770; these read SSIS…NRPL and TQRPWTGKRTYTTSRHGKNARRSSKR. Positions 600–613 are enriched in polar residues; that stretch reads GNYDSESAENSRSI. The span at 759–770 shows a compositional bias: basic residues; that stretch reads RHGKNARRSSKR.

Belongs to the protein kinase superfamily. Ser/Thr protein kinase family.

The catalysed reaction is L-seryl-[protein] + ATP = O-phospho-L-seryl-[protein] + ADP + H(+). It carries out the reaction L-threonyl-[protein] + ATP = O-phospho-L-threonyl-[protein] + ADP + H(+). Its function is as follows. Putative serine/threonine-protein kinase. The sequence is that of Putative serine/threonine-protein kinase YPL150W from Saccharomyces cerevisiae (strain ATCC 204508 / S288c) (Baker's yeast).